Consider the following 291-residue polypeptide: Tyrosine recombinase XerD (291 aa).

Residues methionine 1–glutamate 82 enclose the Core-binding (CB) domain. The Tyr recombinase domain occupies asparagine 103 to lysine 285. Residues arginine 143, lysine 167, histidine 237, arginine 240, and histidine 263 contribute to the active site. Tyrosine 272 functions as the O-(3'-phospho-DNA)-tyrosine intermediate in the catalytic mechanism.

This sequence belongs to the 'phage' integrase family. XerD subfamily. In terms of assembly, forms a cyclic heterotetrameric complex composed of two molecules of XerC and two molecules of XerD.

Its subcellular location is the cytoplasm. In terms of biological role, site-specific tyrosine recombinase, which acts by catalyzing the cutting and rejoining of the recombining DNA molecules. The XerC-XerD complex is essential to convert dimers of the bacterial chromosome into monomers to permit their segregation at cell division. It also contributes to the segregational stability of plasmids. The chain is Tyrosine recombinase XerD from Neisseria meningitidis serogroup A / serotype 4A (strain DSM 15465 / Z2491).